Reading from the N-terminus, the 820-residue chain is Nuclear pore complex protein Nup93 (820 aa).

Belongs to the nucleoporin interacting component (NIC) family.

It is found in the nucleus membrane. Its subcellular location is the nucleus. The protein resides in the nuclear pore complex. Its function is as follows. Plays a role in the nuclear pore complex (NPC) assembly and/or maintenance. In Danio rerio (Zebrafish), this protein is Nuclear pore complex protein Nup93 (dye).